Here is an 83-residue protein sequence, read N- to C-terminus: MDTSLKKNNGALEADNKNYQNYKDEPDKISDVLDDTKYNSMVECCHKNYSTFAPQWDVKERNYIDVPEGPSAKKSIVHRCTII.

Residues 1-26 (MDTSLKKNNGALEADNKNYQNYKDEP) form a disordered region.

The protein belongs to the asfivirus L83L family. Interacts with host IL1B.

The protein resides in the host cytoplasm. Functionally, may subvert the host innate immune response by interacting with host IL1B and interfering with its function. This chain is Protein L83L, found in Ornithodoros (relapsing fever ticks).